A 223-amino-acid polypeptide reads, in one-letter code: Small ribosomal subunit protein uS3 (223 aa).

The KH type-2 domain maps to 39–107 (VRSYLAKKLS…PVHINIQEIR (69 aa)).

This sequence belongs to the universal ribosomal protein uS3 family. Part of the 30S ribosomal subunit. Forms a tight complex with proteins S10 and S14.

Its function is as follows. Binds the lower part of the 30S subunit head. Binds mRNA in the 70S ribosome, positioning it for translation. The polypeptide is Small ribosomal subunit protein uS3 (Nitrosococcus oceani (strain ATCC 19707 / BCRC 17464 / JCM 30415 / NCIMB 11848 / C-107)).